The sequence spans 305 residues: UPF0282 protein Pisl_0021 (305 aa).

Belongs to the UPF0282 family.

The sequence is that of UPF0282 protein Pisl_0021 from Pyrobaculum islandicum (strain DSM 4184 / JCM 9189 / GEO3).